Consider the following 252-residue polypeptide: Outer kinetochore KNL1 complex subunit ZWINT (252 aa).

The disordered stretch occupies residues 80-99; that stretch reads QSPDALASEDASRQKATETK. The segment covering 89–99 has biased composition (basic and acidic residues); sequence DASRQKATETK. The stretch at 120–221 forms a coiled coil; that stretch reads LSEALPQVKE…QRNQSYLQLL (102 aa). Ser-216 and Ser-249 each carry phosphoserine.

In terms of assembly, component of the KNL1 complex composed of KNL1 and ZWINT. Part of the ten-subunit outer kinetochore KMN network that includes the KNL1, MIS12 and NDC80 complexes; a bioriented kinetochore contains approximately 150 copies of the network. Interacts with the MIS12 complex subunits MIS12 DSN1, and PMF1. Interacts with the NDC80 complex subunit NDC80 during mitosis. Interacts with ZW10. Interacts with CETN3.

Its subcellular location is the nucleus. The protein resides in the chromosome. It localises to the centromere. The protein localises to the kinetochore. In terms of biological role, acts as a component of the outer kinetochore KNL1 complex that serves as a docking point for spindle assembly checkpoint components and mediates microtubule-kinetochore interactions. Kinetochores, consisting of a centromere-associated inner segment and a microtubule-contacting outer segment, play a crucial role in chromosome segregation by mediating the physical connection between centromeric DNA and spindle microtubules. The outer kinetochore is made up of the ten-subunit KMN network, comprising the MIS12, NDC80 and KNL1 complexes, and auxiliary microtubule-associated components; together they connect the outer kinetochore with the inner kinetochore, bind microtubules, and mediate interactions with mitotic checkpoint proteins that delay anaphase until chromosomes are bioriented on the spindle. Targets the RZZ complex to the kinetochore at prometaphase. Recruits MAD2L1 to the kinetochore, but is not required for BUB1B localization. In addition to orienting mitotic chromosomes, it is also essential for alignment of homologous chromosomes during meiotic metaphase I. In meiosis I, required to activate the spindle assembly checkpoint at unattached kinetochores to correct erroneous kinetochore-microtubule attachments. The polypeptide is Outer kinetochore KNL1 complex subunit ZWINT (Zwint) (Mus musculus (Mouse)).